Consider the following 252-residue polypeptide: Glucosamine-6-phosphate deaminase (252 aa).

Catalysis depends on Asp-67, which acts as the Proton acceptor; for enolization step. The For ring-opening step role is filled by Asn-137. His-139 serves as the catalytic Proton acceptor; for ring-opening step. The For ring-opening step role is filled by Glu-144.

Belongs to the glucosamine/galactosamine-6-phosphate isomerase family. NagB subfamily.

It carries out the reaction alpha-D-glucosamine 6-phosphate + H2O = beta-D-fructose 6-phosphate + NH4(+). Its pathway is amino-sugar metabolism; N-acetylneuraminate degradation; D-fructose 6-phosphate from N-acetylneuraminate: step 5/5. Functionally, catalyzes the reversible isomerization-deamination of glucosamine 6-phosphate (GlcN6P) to form fructose 6-phosphate (Fru6P) and ammonium ion. The protein is Glucosamine-6-phosphate deaminase of Staphylococcus aureus (strain bovine RF122 / ET3-1).